Consider the following 474-residue polypeptide: RNA-binding protein Nova-1 (474 aa).

The span at 1-12 shows a compositional bias: polar residues; that stretch reads MAAAPIQQNGTH. Residues 1 to 43 are disordered; the sequence is MAAAPIQQNGTHTGVPIDLDPPDSRKRPLEAPPEAGSTKRTNT. The Bipartite nuclear localization signal motif lies at 26–42; sequence KRPLEAPPEAGSTKRTN. 3 consecutive KH domains span residues 48–115, 146–212, and 396–463; these read QYFL…HGFI, IKQV…VELI, and KDVV…QYLI. Positions 394-474 are required for RNA binding; that stretch reads GSKDVVEIAV…QRITYEQGVR (81 aa).

Interacts with PTBP2; the interaction is direct.

It is found in the nucleus. Functions to regulate alternative splicing in neurons by binding pre-mRNA in a sequence-specific manner to activate exon inclusion or exclusion. It binds specifically to the sequences 5'-YCAY-3' and regulates splicing in only a subset of regulated exons. Binding to an exonic 5'-YCAY-3' cluster changes the protein complexes assembled on pre-mRNA, blocking U1 snRNP binding and exon inclusion, whereas binding to an intronic 5'-YCAY-3' cluster enhances spliceosome assembly and exon inclusion. Binding to 5'-YCAY-3' clusters results in a local and asymmetric action to regulate spliceosome assembly and alternative splicing in neurons. Binding to an exonic 5'-YCAY-3' cluster changed the protein complexes assembled on pre-mRNA, blocking U1 snRNP (small nuclear ribonucleoprotein) binding and exon inclusion, whereas binding to an intronic 5'-YCAY-3' cluster enhanced spliceosome assembly and exon inclusion. With NOVA1, they perform unique biological functions in different brain areas and cell types. Autoregulates its own expression by acting as a splicing repressor. Acts to activate the inclusion of exon E3A in the glycine receptor alpha-2 chain and of exon E9 in gamma-aminobutyric-acid receptor gamma-2 subunit via a distal downstream UCAU-rich intronic splicing enhancer. Acts to regulate a novel glycine receptor alpha-2 chain splice variant (alpha-2N) in developing spinal cord. This is RNA-binding protein Nova-1 from Rattus norvegicus (Rat).